We begin with the raw amino-acid sequence, 98 residues long: Protein PROLINE CONTENT ALTERNATIVE 22 (98 aa).

In terms of tissue distribution, mainly expressed in flowers, to a lower extent, in roots and, at very low levels, in leaves and stems.

The protein resides in the cytoplasm. Acts as an opponent to RZF1 during early seedling growth in term of proline accumulation in response to dehydration and abscisic acid (ABA). Confers sensitivity to abiotic stresses such as ABA, drought and osmotic stress (e.g. mannitol treatment) by preventing proline accumulation and by reducing the expression of dehydration-inducible genes. Promotes the production of lipid peroxidation by drought stress thus leading to malondialdehyde (MDA) synthesis. Prevents pollen tube elongation. Necessary for RZF1 expression in seedlings. This Arabidopsis thaliana (Mouse-ear cress) protein is Protein PROLINE CONTENT ALTERNATIVE 22.